A 401-amino-acid polypeptide reads, in one-letter code: GRIP domain-containing protein C119.12 (401 aa).

Residues 7–296 (NETKLVENEN…TLLIGKLQHE (290 aa)) are a coiled coil. Residues 315–366 (NNAEKIDKQLISNLFVSFLTLPRADTKRFEILQLISSVLDWNDTQREQTGLQ) form the GRIP domain.

It localises to the golgi apparatus lumen. This chain is GRIP domain-containing protein C119.12, found in Schizosaccharomyces pombe (strain 972 / ATCC 24843) (Fission yeast).